The sequence spans 1185 residues: Liprin-alpha-4 (1185 aa).

2 coiled-coil regions span residues 24-123 and 165-499; these read ANFE…CLVS and DEKV…GRGG. Disordered stretches follow at residues 638–709 and 721–757; these read SASP…RTLR and EEGK…KSSI. Phosphoserine is present on S640. Over residues 645–656 the composition is skewed to polar residues; the sequence is GRSTPKLTSRSA. Position 681 is a phosphoserine (S681). Residues 684-695 are compositionally biased toward basic and acidic residues; it reads SREENREDKATI. The segment covering 729–742 has biased composition (low complexity); it reads DQGSNPSSSNSSQD. SAM domains are found at residues 829-895, 944-1008, and 1032-1101; these read WDGP…MVSL, NHEW…LKRL, and WTND…LLAL.

It belongs to the liprin family. Liprin-alpha subfamily. Forms homodimers and heterodimers with liprins-alpha and liprins-beta. Interacts with the second PTPase domain of PTPRD, PTPRF and PTPRS. Interacts with RIMS1 and RIMS2. Interacts with GIT1 and GIT2. Interacts with GRIP1. Interacts with KIF1A. As to expression, expressed only in the heart, brain, and skeletal muscle.

It localises to the cytoplasm. It is found in the cell surface. May regulate the disassembly of focal adhesions. May localize receptor-like tyrosine phosphatases type 2A at specific sites on the plasma membrane, possibly regulating their interaction with the extracellular environment and their association with substrates. In Homo sapiens (Human), this protein is Liprin-alpha-4 (PPFIA4).